Reading from the N-terminus, the 252-residue chain is 3-dehydroquinate dehydratase (252 aa).

Residues serine 21, 46-48 (EWR), and arginine 82 each bind 3-dehydroquinate. Histidine 143 functions as the Proton donor/acceptor in the catalytic mechanism. The Schiff-base intermediate with substrate role is filled by lysine 170. Arginine 213, serine 232, and glutamine 236 together coordinate 3-dehydroquinate.

Belongs to the type-I 3-dehydroquinase family. Homodimer.

The catalysed reaction is 3-dehydroquinate = 3-dehydroshikimate + H2O. The protein operates within metabolic intermediate biosynthesis; chorismate biosynthesis; chorismate from D-erythrose 4-phosphate and phosphoenolpyruvate: step 3/7. Its function is as follows. Involved in the third step of the chorismate pathway, which leads to the biosynthesis of aromatic amino acids. Catalyzes the cis-dehydration of 3-dehydroquinate (DHQ) and introduces the first double bond of the aromatic ring to yield 3-dehydroshikimate. This chain is 3-dehydroquinate dehydratase, found in Escherichia coli (strain 55989 / EAEC).